Here is a 376-residue protein sequence, read N- to C-terminus: N-acetyldiaminopimelate deacetylase (376 aa).

Asp-69 is an active-site residue. The active-site Proton acceptor is Glu-128.

This sequence belongs to the peptidase M20A family. N-acetyldiaminopimelate deacetylase subfamily.

It catalyses the reaction N-acetyl-(2S,6S)-2,6-diaminopimelate + H2O = (2S,6S)-2,6-diaminopimelate + acetate. The protein operates within amino-acid biosynthesis; L-lysine biosynthesis via DAP pathway; LL-2,6-diaminopimelate from (S)-tetrahydrodipicolinate (acetylase route): step 3/3. In terms of biological role, catalyzes the conversion of N-acetyl-diaminopimelate to diaminopimelate and acetate. In Streptococcus pneumoniae serotype 19F (strain G54), this protein is N-acetyldiaminopimelate deacetylase.